A 793-amino-acid polypeptide reads, in one-letter code: Probable serine/threonine-protein kinase fnkA (793 aa).

Positions 11–358 (WEILSQLGTG…IINLISHNFI (348 aa)) constitute a Protein kinase domain. ATP contacts are provided by residues 17-25 (LGTGAFGRV) and Lys46. Asp138 functions as the Proton acceptor in the catalytic mechanism. FNIP repeat units follow at residues 403–444 (FNQT…FGAR), 470–514 (YNQP…ILGD), 515–557 (YDQK…LGYR), 558–601 (FNKA…LGYC), and 691–733 (FIRP…LGSR).

This sequence belongs to the protein kinase superfamily. STE Ser/Thr protein kinase family. Mg(2+) serves as cofactor.

It catalyses the reaction L-seryl-[protein] + ATP = O-phospho-L-seryl-[protein] + ADP + H(+). It carries out the reaction L-threonyl-[protein] + ATP = O-phospho-L-threonyl-[protein] + ADP + H(+). The polypeptide is Probable serine/threonine-protein kinase fnkA (Dictyostelium discoideum (Social amoeba)).